The following is a 379-amino-acid chain: Transcription termination factor 1b, mitochondrial (379 aa).

The N-terminal 37 residues, 1 to 37 (MASRNIWCVRRNFLFDLRGWMLQYSAEVFLKSISFRT), are a transit peptide targeting the mitochondrion. Interaction with DNA stretches follow at residues 151–152 (RS), 229–233 (QSTKR), 306–313 (SEKKFNDK), 337–340 (SINT), and 366–373 (SQRRYEAK).

The protein belongs to the mTERF family. Monomer. In terms of processing, phosphoprotein with mostly four phosphate groups. While the DNA-binding activity is unaffected by the phosphorylation state, only the phosphorylated form of the protein is active for termination activity. Functioning seems to be regulated by phosphorylation. Expressed strongly in the heart and at lower levels in brain, liver and kidney.

It is found in the mitochondrion. Its function is as follows. Transcription termination factor. Binds to a 28 bp region within the tRNA(Leu(uur)) gene at a position immediately adjacent to and downstream of the 16S rRNA gene; this region comprises a tridecamer sequence critical for directing accurate termination. Binds DNA along the major grove and promotes DNA bending and partial unwinding. Promotes base flipping. Transcription termination activity appears to be polarized with highest specificity for transcripts initiated on the light strand. In Mus musculus (Mouse), this protein is Transcription termination factor 1b, mitochondrial.